We begin with the raw amino-acid sequence, 1110 residues long: Error-prone DNA polymerase (1110 aa).

A disordered region spans residues 1072-1110 (LGELHEPLNDDRREHPDNPAQRIRHPRDVRILPPSRDFH). Composition is skewed to basic and acidic residues over residues 1073 to 1088 (GELH…EHPD) and 1097 to 1110 (PRDV…RDFH).

This sequence belongs to the DNA polymerase type-C family. DnaE2 subfamily.

The protein resides in the cytoplasm. It catalyses the reaction DNA(n) + a 2'-deoxyribonucleoside 5'-triphosphate = DNA(n+1) + diphosphate. DNA polymerase involved in damage-induced mutagenesis and translesion synthesis (TLS). It is not the major replicative DNA polymerase. In Rhodopseudomonas palustris (strain BisB5), this protein is Error-prone DNA polymerase.